A 239-amino-acid polypeptide reads, in one-letter code: tRNA (guanine-N(1)-)-methyltransferase (239 aa).

S-adenosyl-L-methionine contacts are provided by residues glycine 108 and 127 to 132 (IGDYVL).

The protein belongs to the RNA methyltransferase TrmD family. As to quaternary structure, homodimer.

Its subcellular location is the cytoplasm. The enzyme catalyses guanosine(37) in tRNA + S-adenosyl-L-methionine = N(1)-methylguanosine(37) in tRNA + S-adenosyl-L-homocysteine + H(+). In terms of biological role, specifically methylates guanosine-37 in various tRNAs. This chain is tRNA (guanine-N(1)-)-methyltransferase, found in Lactobacillus helveticus (strain DPC 4571).